The primary structure comprises 196 residues: MSSQIDAVILAGGMARRMGGDDKGLVELNGEAMIKHTIDRIKPQVKEILINANRNQTRYAEFGFKVISDEHSGFLGPLAGMITAMGQTDADYLLVVPCDCPLLPLDLVPRMLAAIEAEKAEIAVASDGEYEQPVVLLLKPSLRDSMKAFLEAGERKVDFWYIKHHFVVASFADQPNAFVNVNTPEQKQRLAIKITQ.

Residues 10-12 (LAG), K23, N51, D69, and D99 each bind GTP. D99 contacts Mg(2+).

This sequence belongs to the MobA family. In terms of assembly, monomer. It depends on Mg(2+) as a cofactor.

Its subcellular location is the cytoplasm. The enzyme catalyses Mo-molybdopterin + GTP + H(+) = Mo-molybdopterin guanine dinucleotide + diphosphate. In terms of biological role, transfers a GMP moiety from GTP to Mo-molybdopterin (Mo-MPT) cofactor (Moco or molybdenum cofactor) to form Mo-molybdopterin guanine dinucleotide (Mo-MGD) cofactor. This is Molybdenum cofactor guanylyltransferase from Shewanella sp. (strain W3-18-1).